Reading from the N-terminus, the 458-residue chain is UDP-N-acetylmuramate--L-alanine ligase (458 aa).

Position 112-118 (G112–T118) interacts with ATP.

This sequence belongs to the MurCDEF family.

It localises to the cytoplasm. It catalyses the reaction UDP-N-acetyl-alpha-D-muramate + L-alanine + ATP = UDP-N-acetyl-alpha-D-muramoyl-L-alanine + ADP + phosphate + H(+). It functions in the pathway cell wall biogenesis; peptidoglycan biosynthesis. Cell wall formation. The chain is UDP-N-acetylmuramate--L-alanine ligase from Geotalea uraniireducens (strain Rf4) (Geobacter uraniireducens).